We begin with the raw amino-acid sequence, 361 residues long: RNA 3'-terminal phosphate cyclase (361 aa).

Residues glutamine 105, proline 132, tyrosine 295, aspartate 298, glutamine 299, and histidine 321 each contribute to the ATP site. The active-site Tele-AMP-histidine intermediate is the histidine 321.

It belongs to the RNA 3'-terminal cyclase family. Type 1 subfamily.

It localises to the nucleus. The protein resides in the nucleoplasm. It carries out the reaction a 3'-end 3'-phospho-ribonucleotide-RNA + ATP = a 3'-end 2',3'-cyclophospho-ribonucleotide-RNA + AMP + diphosphate. Functionally, catalyzes the conversion of 3'-phosphate to a 2',3'-cyclic phosphodiester at the end of RNA. The mechanism of action of the enzyme occurs in 3 steps: (A) adenylation of the enzyme by ATP; (B) transfer of adenylate to an RNA-N3'P to produce RNA-N3'PP5'A; (C) and attack of the adjacent 2'-hydroxyl on the 3'-phosphorus in the diester linkage to produce the cyclic end product. Likely functions in some aspects of cellular RNA processing. Function plays an important role in a RNA repair and splicing pathway which controls axon regeneration in response to peripheral (PNS) and central nervous system (CNS) injury. In response to axotomy, negatively regulates splicing of Xbp1 which in turn activates downstream effectors which inhibit axon regeneration, including down-regulating the microtubule regulators ringer and futsch. This is RNA 3'-terminal phosphate cyclase from Drosophila melanogaster (Fruit fly).